Consider the following 237-residue polypeptide: MKAFHLLAALAGAAVAQQAQLCDQYATYTGGVYTINNNLWGKDAGSGSQCTTVNSASSAGTSWSTKWNWSGGENSVKSYANSGLTFNKKLVSQISQIPTTARWSYDNTGIRADVAYDLFTAADINHVTWSGDYELMIWLARYGGVQPIGSQIATATVDGQTWELWYGANGSQKTYSFVAPTPITSFQGDVNDFFKYLTQNHGFPASSQYLITLQFGTEPFTGGPATLSVSNWSASVQ.

Positions 1–16 (MKAFHLLAALAGAAVA) are cleaved as a signal peptide. Pyrrolidone carboxylic acid is present on Gln-17.

It belongs to the glycosyl hydrolase 12 (cellulase H) family.

It localises to the secreted. The catalysed reaction is Endohydrolysis of (1-&gt;4)-beta-D-glucosidic linkages in cellulose, lichenin and cereal beta-D-glucans.. This Aspergillus aculeatus protein is Endoglucanase-1.